A 421-amino-acid polypeptide reads, in one-letter code: Gamma-glutamyl phosphate reductase (421 aa).

It belongs to the gamma-glutamyl phosphate reductase family.

The protein resides in the cytoplasm. It carries out the reaction L-glutamate 5-semialdehyde + phosphate + NADP(+) = L-glutamyl 5-phosphate + NADPH + H(+). It participates in amino-acid biosynthesis; L-proline biosynthesis; L-glutamate 5-semialdehyde from L-glutamate: step 2/2. Functionally, catalyzes the NADPH-dependent reduction of L-glutamate 5-phosphate into L-glutamate 5-semialdehyde and phosphate. The product spontaneously undergoes cyclization to form 1-pyrroline-5-carboxylate. This chain is Gamma-glutamyl phosphate reductase, found in Erythrobacter litoralis (strain HTCC2594).